Reading from the N-terminus, the 249-residue chain is Metallo-beta-lactamase type 2 (249 aa).

Residues 1-22 (MLKKIKISLILALGLTSLQAFG) form the signal peptide. Residues H98, H100, D102, H161, and C180 each coordinate Zn(2+). K183 is a binding site for substrate. Position 222 (H222) interacts with Zn(2+).

Belongs to the metallo-beta-lactamase superfamily. Class-B beta-lactamase family. In terms of assembly, monomer. Zn(2+) is required as a cofactor.

It is found in the periplasm. It catalyses the reaction a beta-lactam + H2O = a substituted beta-amino acid. In terms of biological role, confers resistance to the different beta-lactams antibiotics (penicillin, cephalosporin and carbapenem) via the hydrolysis of the beta-lactam ring. This chain is Metallo-beta-lactamase type 2 (blaB3), found in Elizabethkingia meningoseptica (Chryseobacterium meningosepticum).